A 141-amino-acid polypeptide reads, in one-letter code: uncharacterized protein (141 aa).

2 consecutive transmembrane segments (helical) span residues 20–42 and 52–74; these read FLVNLPVVICLAAYLVSQVFCLA and LHLCTFFTFFTSFLLVPLAIFTL.

The protein resides in the cell membrane. This is an uncharacterized protein from Archaeoglobus fulgidus (strain ATCC 49558 / DSM 4304 / JCM 9628 / NBRC 100126 / VC-16).